A 156-amino-acid polypeptide reads, in one-letter code: Probable low-salt glycan biosynthesis epimerase Agl13 (156 aa).

Residues arginine 19, glutamate 24, 39-41, arginine 51, histidine 54, and histidine 109 contribute to the substrate site; that span reads MSY.

Belongs to the dTDP-4-dehydrorhamnose 3,5-epimerase family.

It participates in protein modification; protein glycosylation. It functions in the pathway cell surface structure biogenesis; S-layer biogenesis. Functionally, epimerase involved in N-glycan biosynthetic pathway that takes place under low-salt conditions (1.75 M instead of 3.4 M). Participates in the formation of the tetrasaccharide present at 'Asn-532' of S-layer glycoprotein Csg, consisting of a sulfated hexose, 2 hexoses and rhamnose. Involved in the addition of final rhamnose (sugar 4) of the tetrasaccharide on the dolichol phosphate carrier. In Haloferax volcanii (strain ATCC 29605 / DSM 3757 / JCM 8879 / NBRC 14742 / NCIMB 2012 / VKM B-1768 / DS2) (Halobacterium volcanii), this protein is Probable low-salt glycan biosynthesis epimerase Agl13 (agl13).